The primary structure comprises 206 residues: NADH-quinone oxidoreductase subunit C (206 aa).

It belongs to the complex I 30 kDa subunit family. NDH-1 is composed of 14 different subunits. Subunits NuoB, C, D, E, F, and G constitute the peripheral sector of the complex.

The protein resides in the cell inner membrane. The catalysed reaction is a quinone + NADH + 5 H(+)(in) = a quinol + NAD(+) + 4 H(+)(out). In terms of biological role, NDH-1 shuttles electrons from NADH, via FMN and iron-sulfur (Fe-S) centers, to quinones in the respiratory chain. The immediate electron acceptor for the enzyme in this species is believed to be ubiquinone. Couples the redox reaction to proton translocation (for every two electrons transferred, four hydrogen ions are translocated across the cytoplasmic membrane), and thus conserves the redox energy in a proton gradient. This chain is NADH-quinone oxidoreductase subunit C, found in Bordetella avium (strain 197N).